A 351-amino-acid polypeptide reads, in one-letter code: Dihydroorotate dehydrogenase (quinone) (351 aa).

FMN is bound by residues 61-65 (AGLDK) and threonine 85. Lysine 65 contributes to the substrate binding site. 110 to 114 (NRMGF) lines the substrate pocket. Positions 139 and 172 each coordinate FMN. Asparagine 172 contributes to the substrate binding site. Serine 175 serves as the catalytic Nucleophile. Asparagine 177 is a substrate binding site. Positions 217 and 245 each coordinate FMN. Position 246-247 (246-247 (NT)) interacts with substrate. Residues glycine 268, glycine 297, and 318-319 (YT) contribute to the FMN site.

Belongs to the dihydroorotate dehydrogenase family. Type 2 subfamily. As to quaternary structure, monomer. It depends on FMN as a cofactor.

Its subcellular location is the cell membrane. The enzyme catalyses (S)-dihydroorotate + a quinone = orotate + a quinol. It participates in pyrimidine metabolism; UMP biosynthesis via de novo pathway; orotate from (S)-dihydroorotate (quinone route): step 1/1. Its function is as follows. Catalyzes the conversion of dihydroorotate to orotate with quinone as electron acceptor. In Xylella fastidiosa (strain M12), this protein is Dihydroorotate dehydrogenase (quinone).